The sequence spans 361 residues: S-adenosylmethionine:tRNA ribosyltransferase-isomerase (361 aa).

The protein belongs to the QueA family. In terms of assembly, monomer.

The protein localises to the cytoplasm. It catalyses the reaction 7-aminomethyl-7-carbaguanosine(34) in tRNA + S-adenosyl-L-methionine = epoxyqueuosine(34) in tRNA + adenine + L-methionine + 2 H(+). The protein operates within tRNA modification; tRNA-queuosine biosynthesis. In terms of biological role, transfers and isomerizes the ribose moiety from AdoMet to the 7-aminomethyl group of 7-deazaguanine (preQ1-tRNA) to give epoxyqueuosine (oQ-tRNA). The polypeptide is S-adenosylmethionine:tRNA ribosyltransferase-isomerase (Actinobacillus pleuropneumoniae serotype 5b (strain L20)).